The primary structure comprises 113 residues: Large ribosomal subunit protein uL22 (113 aa).

This sequence belongs to the universal ribosomal protein uL22 family. Part of the 50S ribosomal subunit.

Its function is as follows. This protein binds specifically to 23S rRNA; its binding is stimulated by other ribosomal proteins, e.g. L4, L17, and L20. It is important during the early stages of 50S assembly. It makes multiple contacts with different domains of the 23S rRNA in the assembled 50S subunit and ribosome. Functionally, the globular domain of the protein is located near the polypeptide exit tunnel on the outside of the subunit, while an extended beta-hairpin is found that lines the wall of the exit tunnel in the center of the 70S ribosome. This is Large ribosomal subunit protein uL22 from Bacillus subtilis (strain 168).